The primary structure comprises 369 residues: Flagellar P-ring protein (369 aa).

An N-terminal signal peptide occupies residues 1-22 (MTKFKHLLALAALLLAAGAAQA).

Belongs to the FlgI family. In terms of assembly, the basal body constitutes a major portion of the flagellar organelle and consists of four rings (L,P,S, and M) mounted on a central rod.

Its subcellular location is the periplasm. The protein resides in the bacterial flagellum basal body. Its function is as follows. Assembles around the rod to form the L-ring and probably protects the motor/basal body from shearing forces during rotation. This is Flagellar P-ring protein from Pseudomonas aeruginosa (strain LESB58).